A 470-amino-acid polypeptide reads, in one-letter code: Uronate isomerase (470 aa).

The protein belongs to the metallo-dependent hydrolases superfamily. Uronate isomerase family.

The catalysed reaction is D-glucuronate = D-fructuronate. It carries out the reaction aldehydo-D-galacturonate = keto-D-tagaturonate. Its pathway is carbohydrate metabolism; pentose and glucuronate interconversion. The sequence is that of Uronate isomerase from Vibrio vulnificus (strain CMCP6).